The primary structure comprises 307 residues: Ornithine carbamoyltransferase (307 aa).

Residues 56-59 (STRT), glutamine 83, arginine 107, and 134-137 (HPCQ) each bind carbamoyl phosphate. L-ornithine-binding positions include asparagine 165, aspartate 223, and 227 to 228 (SM). Residues 263–264 (CL) and arginine 291 each bind carbamoyl phosphate.

The protein belongs to the aspartate/ornithine carbamoyltransferase superfamily. OTCase family.

Its subcellular location is the cytoplasm. It carries out the reaction carbamoyl phosphate + L-ornithine = L-citrulline + phosphate + H(+). The protein operates within amino-acid degradation; L-arginine degradation via ADI pathway; carbamoyl phosphate from L-arginine: step 2/2. Its function is as follows. Reversibly catalyzes the transfer of the carbamoyl group from carbamoyl phosphate (CP) to the N(epsilon) atom of ornithine (ORN) to produce L-citrulline. In Cupriavidus taiwanensis (strain DSM 17343 / BCRC 17206 / CCUG 44338 / CIP 107171 / LMG 19424 / R1) (Ralstonia taiwanensis (strain LMG 19424)), this protein is Ornithine carbamoyltransferase.